The sequence spans 164 residues: UPF0114 protein KPN78578_33570 (164 aa).

4 helical membrane-spanning segments follow: residues 15–35 (LLAP…IKFF), 53–73 (MILT…LVMV), 109–126 (VAAS…RVFM), and 136–156 (LMWY…MGYL).

This sequence belongs to the UPF0114 family.

It is found in the cell membrane. The protein is UPF0114 protein KPN78578_33570 of Klebsiella pneumoniae subsp. pneumoniae (strain ATCC 700721 / MGH 78578).